The primary structure comprises 131 residues: Small ribosomal subunit protein uS8 (131 aa).

This sequence belongs to the universal ribosomal protein uS8 family. In terms of assembly, part of the 30S ribosomal subunit. Contacts proteins S5 and S12.

In terms of biological role, one of the primary rRNA binding proteins, it binds directly to 16S rRNA central domain where it helps coordinate assembly of the platform of the 30S subunit. This is Small ribosomal subunit protein uS8 from Mesomycoplasma hyopneumoniae (strain 7448) (Mycoplasma hyopneumoniae).